The primary structure comprises 467 residues: Mitochondrial distribution and morphology protein 10 (467 aa).

The protein belongs to the MDM10 family. As to quaternary structure, component of the ER-mitochondria encounter structure (ERMES) or MDM complex, composed of MMM1, MDM10, MDM12 and MDM34. Associates with the mitochondrial outer membrane sorting assembly machinery SAM(core) complex.

It localises to the mitochondrion outer membrane. Its function is as follows. Component of the ERMES/MDM complex, which serves as a molecular tether to connect the endoplasmic reticulum and mitochondria. Components of this complex are involved in the control of mitochondrial shape and protein biogenesis and may function in phospholipid exchange. MDM10 is involved in the late assembly steps of the general translocase of the mitochondrial outer membrane (TOM complex). Functions in the TOM40-specific route of the assembly of outer membrane beta-barrel proteins, including the association of TOM40 with the receptor TOM22 and small TOM proteins. Can associate with the SAM(core) complex as well as the MDM12-MMM1 complex, both involved in late steps of the major beta-barrel assembly pathway, that is responsible for biogenesis of all outer membrane beta-barrel proteins. May act as a switch that shuttles between both complexes and channels precursor proteins into the TOM40-specific pathway. Plays a role in mitochondrial morphology and in the inheritance of mitochondria. This chain is Mitochondrial distribution and morphology protein 10, found in Ajellomyces capsulatus (strain G186AR / H82 / ATCC MYA-2454 / RMSCC 2432) (Darling's disease fungus).